Here is a 296-residue protein sequence, read N- to C-terminus: Methylsterol monooxygenase erg25B (296 aa).

The next 3 membrane-spanning stretches (helical) occupy residues 50–70 (IMSFVMHEIVYFGRSVPWILI), 98–118 (FVLLSHFTVELPQIWLFHPMA), and 125–145 (TSVPFPSVWTMMYQIAIFFVL). Residues 140 to 276 (AIFFVLEDTW…FRWWDYLLDT (137 aa)) form the Fatty acid hydroxylase domain. Residues 154–158 (HRALH) carry the Histidine box-1 motif. The short motif at 167 to 171 (HKIHH) is the Histidine box-2 element. Residues 201 to 221 (ILWCALTGDLHIFTMYVWIVL) form a helical membrane-spanning segment. A Histidine box-3 motif is present at residues 251-257 (HHDLHHE).

The protein belongs to the sterol desaturase family. It depends on Fe cation as a cofactor.

The protein localises to the endoplasmic reticulum membrane. The protein operates within steroid metabolism; ergosterol biosynthesis. Functionally, sterol-C4-methyl oxidase; part of the third module of ergosterol biosynthesis pathway that includes the late steps of the pathway. Erg25B is a catalytic component of the C-4 demethylation complex that catalyzes the conversion of 4,4-dimethylfecosterol into fecosterol via 4-methylfecosterol. The third module or late pathway involves the ergosterol synthesis itself through consecutive reactions that mainly occur in the endoplasmic reticulum (ER) membrane. Firstly, the squalene synthase erg9 catalyzes the condensation of 2 farnesyl pyrophosphate moieties to form squalene, which is the precursor of all steroids. Squalene synthase is crucial for balancing the incorporation of farnesyl diphosphate (FPP) into sterol and nonsterol isoprene synthesis. Secondly, squalene is converted into lanosterol by the consecutive action of the squalene epoxidase erg1 and the lanosterol synthase erg7. Then, the delta(24)-sterol C-methyltransferase erg6 methylates lanosterol at C-24 to produce eburicol. Eburicol is the substrate of the sterol 14-alpha demethylase encoded by cyp51A and cyp51B, to yield 4,4,24-trimethyl ergosta-8,14,24(28)-trienol. The C-14 reductase erg24 then reduces the C14=C15 double bond which leads to 4,4-dimethylfecosterol. A sequence of further demethylations at C-4, involving the C-4 demethylation complex containing the C-4 methylsterol oxidases erg25A or erg25B, the sterol-4-alpha-carboxylate 3-dehydrogenase erg26 and the 3-keto-steroid reductase erg27, leads to the production of fecosterol via 4-methylfecosterol. The C-8 sterol isomerase erg2 then catalyzes the reaction which results in unsaturation at C-7 in the B ring of sterols and thus converts fecosterol to episterol. The sterol-C5-desaturase erg3B then catalyzes the introduction of a C-5 double bond in the B ring to produce 5-dehydroepisterol. The 2 other sterol-C5-desaturases, erg3A and erg3C, seem to be less important in ergosterol biosynthesis. The C-22 sterol desaturase erg5 further converts 5-dehydroepisterol into ergosta-5,7,22,24(28)-tetraen-3beta-ol by forming the C-22(23) double bond in the sterol side chain. Finally, ergosta-5,7,22,24(28)-tetraen-3beta-ol is substrate of the C-24(28) sterol reductases erg4A and erg4B to produce ergosterol. Possible alternative sterol biosynthetic pathways might exist from fecosterol to ergosterol, depending on the activities of the erg3 isoforms. This is Methylsterol monooxygenase erg25B from Aspergillus fumigatus (strain ATCC MYA-4609 / CBS 101355 / FGSC A1100 / Af293) (Neosartorya fumigata).